A 237-amino-acid chain; its full sequence is uncharacterized protein (237 aa).

The signal sequence occupies residues 1 to 27 (MKSFLRKPKFWLLLLGGLSTSSIILSA). Cys-28 carries N-palmitoyl cysteine lipidation. A lipid anchor (S-diacylglycerol cysteine) is attached at Cys-28.

Belongs to the MG307/MG309/MG338 family.

It localises to the membrane. This is an uncharacterized protein from Mycoplasma pneumoniae (strain ATCC 29342 / M129 / Subtype 1) (Mycoplasmoides pneumoniae).